Reading from the N-terminus, the 352-residue chain is Gap junction alpha-4 protein (352 aa).

Over 2–23 the chain is Cytoplasmic; the sequence is GDWEFLEKLLDQVQEHSTSIGK. A helical membrane pass occupies residues 24 to 46; the sequence is IWLMVLFIFRILILGLAGESVWG. Over 47–76 the chain is Extracellular; sequence DEQSDFTCNTEQPGCTNVCYDKAFPISHVR. A helical membrane pass occupies residues 77–99; sequence YWVLQFLFVSTPTLFYLGHVIYL. Over 100–153 the chain is Cytoplasmic; sequence SRKEEKLKQKESELRALDDKEQVEQAIAIIEKKKLKLYIQEDGTVKIKGALMYT. The helical transmembrane segment at 154-176 threads the bilayer; that stretch reads YLTSVIFKSIFEAGFLLGQWYLY. At 177 to 208 the chain is on the extracellular side; it reads GFVMTPIYVCERVPCPHKVDCFVSRPMEKTIF. A helical transmembrane segment spans residues 209–231; it reads IIFMLVVSLISLFLNVLELIHLI. The Cytoplasmic portion of the chain corresponds to 232–352; it reads CKSMIHALKK…SSSASKKQYV (121 aa). The segment at 332-352 is disordered; sequence HSTVEKASTRASSSASKKQYV. Positions 340 to 352 are enriched in low complexity; it reads TRASSSASKKQYV.

This sequence belongs to the connexin family. Alpha-type (group II) subfamily. In terms of assembly, a connexon is composed of a hexamer of connexins. Expressed in ovarian somatic cells, heart, leg muscle, liver and eye but not in brain.

The protein localises to the cell membrane. Its subcellular location is the cell junction. It is found in the gap junction. In terms of biological role, one gap junction consists of a cluster of closely packed pairs of transmembrane channels, the connexons, through which materials of low MW diffuse from one cell to a neighboring cell. The sequence is that of Gap junction alpha-4 protein (gja4) from Xenopus laevis (African clawed frog).